A 297-amino-acid polypeptide reads, in one-letter code: Indole-3-glycerol phosphate synthase (297 aa).

This sequence belongs to the TrpC family.

It carries out the reaction 1-(2-carboxyphenylamino)-1-deoxy-D-ribulose 5-phosphate + H(+) = (1S,2R)-1-C-(indol-3-yl)glycerol 3-phosphate + CO2 + H2O. Its pathway is amino-acid biosynthesis; L-tryptophan biosynthesis; L-tryptophan from chorismate: step 4/5. In Trichodesmium erythraeum (strain IMS101), this protein is Indole-3-glycerol phosphate synthase.